Here is a 381-residue protein sequence, read N- to C-terminus: Subtilisin E (381 aa).

The signal sequence occupies residues 1 to 29 (MRSKKLWISLLFALTLIFTMAFSNMSAQA). The propeptide occupies 30-106 (AGKSSTEKKY…VEEDHIAHEY (77 aa)). Residues 38–103 (KYIVGFKQTM…VAYVEEDHIA (66 aa)) enclose the Inhibitor I9 domain. Position 108 (glutamine 108) interacts with Ca(2+). Residues 111-380 (PYGISQIKAP…KGLINVQAAA (270 aa)) enclose the Peptidase S8 domain. Aspartate 138 acts as the Charge relay system in catalysis. Aspartate 147 provides a ligand contact to Ca(2+). Histidine 170 functions as the Charge relay system in the catalytic mechanism. Positions 181, 183, 185, 187, 275, 277, 280, and 303 each coordinate Ca(2+). The Charge relay system role is filled by serine 327.

Belongs to the peptidase S8 family. Requires Ca(2+) as cofactor.

It localises to the secreted. The catalysed reaction is Hydrolysis of proteins with broad specificity for peptide bonds, and a preference for a large uncharged residue in P1. Hydrolyzes peptide amides.. Its activity is regulated as follows. Inhibited by PMSF (phenylmethylsulphonyl fluoride) and 3,4-dichloroisocoumarin but not by EDTA (shown for strain RT-5). In terms of biological role, an extracellular alkaline serine protease, it catalyzes the hydrolysis of proteins and peptide amides. The protein is Subtilisin E of Bacillus subtilis (strain 168).